The chain runs to 315 residues: Probable cell division protein WhiA (315 aa).

Positions 280–313 form a DNA-binding region, H-T-H motif; that stretch reads SLKELGQMLDPQVGKSGINHRLRKIEKIAEELRT.

Belongs to the WhiA family.

Functionally, involved in cell division and chromosome segregation. This Clostridium botulinum (strain Alaska E43 / Type E3) protein is Probable cell division protein WhiA.